Consider the following 818-residue polypeptide: Protein Cep78 homolog (818 aa).

Disordered stretches follow at residues 513–589 (LDVE…HEFA), 691–748 (RQAN…TEAT), and 768–798 (KQSE…DQNV). Residues 514–539 (DVEEEEEEEEEEQQAEESQSESEPQN) are compositionally biased toward acidic residues. The segment covering 561–589 (VRSEIKYVENNPKEAAKKNRESKSDHEFA) has biased composition (basic and acidic residues). Residues 782–792 (GDAGGGGGSGD) show a composition bias toward gly residues.

It belongs to the CEP78 family.

Its subcellular location is the cytoplasm. The protein localises to the cytoskeleton. It is found in the microtubule organizing center. The protein resides in the centrosome. It localises to the centriole. Its subcellular location is the cilium basal body. Functionally, may play a role in cilium biogenesis. The polypeptide is Protein Cep78 homolog (Drosophila melanogaster (Fruit fly)).